Consider the following 163-residue polypeptide: UPF0416 protein RBE_1121 (163 aa).

Belongs to the UPF0416 family.

The protein is UPF0416 protein RBE_1121 of Rickettsia bellii (strain RML369-C).